Reading from the N-terminus, the 235-residue chain is (5-formylfuran-3-yl)methyl phosphate synthase (235 aa).

Residue Lys27 is the Schiff-base intermediate with substrate of the active site. The active-site Proton acceptor is the Lys85.

It belongs to the MfnB family. Homohexamer. Trimer of dimers.

It carries out the reaction 2 D-glyceraldehyde 3-phosphate = 4-(hydroxymethyl)-2-furancarboxaldehyde phosphate + phosphate + 2 H2O. The protein operates within cofactor biosynthesis; methanofuran biosynthesis. Its function is as follows. Catalyzes the formation of 4-(hydroxymethyl)-2-furancarboxaldehyde phosphate (4-HFC-P) from two molecules of glyceraldehyde-3-P (GA-3-P). The polypeptide is (5-formylfuran-3-yl)methyl phosphate synthase (Methanocaldococcus jannaschii (strain ATCC 43067 / DSM 2661 / JAL-1 / JCM 10045 / NBRC 100440) (Methanococcus jannaschii)).